Consider the following 100-residue polypeptide: Putative pterin-4-alpha-carbinolamine dehydratase (100 aa).

This sequence belongs to the pterin-4-alpha-carbinolamine dehydratase family.

It catalyses the reaction (4aS,6R)-4a-hydroxy-L-erythro-5,6,7,8-tetrahydrobiopterin = (6R)-L-erythro-6,7-dihydrobiopterin + H2O. The polypeptide is Putative pterin-4-alpha-carbinolamine dehydratase (Allorhizobium ampelinum (strain ATCC BAA-846 / DSM 112012 / S4) (Agrobacterium vitis (strain S4))).